The primary structure comprises 205 residues: Glutathione peroxidase 1 (205 aa).

The residue at position 37 (Ser37) is a Phosphoserine. Residue Sec52 is part of the active site. A non-standard amino acid (selenocysteine) is located at residue Sec52. 2 positions are modified to N6-acetyllysine; alternate: Lys91 and Lys117. Lys91 and Lys117 each carry N6-succinyllysine; alternate. The N-linked (Glc) (glycation) lysine; in vitro glycan is linked to Lys117. Lys124 is modified (N6-acetyllysine). Lys151 carries the N6-acetyllysine; alternate modification. Lys151 carries the N6-succinyllysine; alternate modification. Ser200 and Ser204 each carry phosphoserine.

This sequence belongs to the glutathione peroxidase family. Homotetramer. Interacts with MIEN1. During periods of oxidative stress, Sec-52 may react with a superoxide radical, irreversibly lose hydroselenide and be converted to dehydroalanine.

It is found in the cytoplasm. It localises to the mitochondrion. The enzyme catalyses 2 glutathione + H2O2 = glutathione disulfide + 2 H2O. The catalysed reaction is a hydroperoxy polyunsaturated fatty acid + 2 glutathione = a hydroxy polyunsaturated fatty acid + glutathione disulfide + H2O. It carries out the reaction tert-butyl hydroperoxide + 2 glutathione = tert-butanol + glutathione disulfide + H2O. It catalyses the reaction cumene hydroperoxide + 2 glutathione = 2-phenylpropan-2-ol + glutathione disulfide + H2O. The enzyme catalyses (13S)-hydroperoxy-(9Z,11E)-octadecadienoate + 2 glutathione = (13S)-hydroxy-(9Z,11E)-octadecadienoate + glutathione disulfide + H2O. The catalysed reaction is (9S)-hydroperoxy-(10E,12Z)-octadecadienoate + 2 glutathione = (9S)-hydroxy-(10E,12Z)-octadecadienoate + glutathione disulfide + H2O. It carries out the reaction (5S)-hydroperoxy-(6E,8Z,11Z,14Z)-eicosatetraenoate + 2 glutathione = (5S)-hydroxy-(6E,8Z,11Z,14Z)-eicosatetraenoate + glutathione disulfide + H2O. It catalyses the reaction (12S)-hydroperoxy-(5Z,8Z,10E,14Z)-eicosatetraenoate + 2 glutathione = (12S)-hydroxy-(5Z,8Z,10E,14Z)-eicosatetraenoate + glutathione disulfide + H2O. The enzyme catalyses (12R)-hydroperoxy-(5Z,8Z,10E,14Z)-eicosatetraenoate + 2 glutathione = (12R)-hydroxy-(5Z,8Z,10E,14Z)-eicosatetraenoate + glutathione disulfide + H2O. The catalysed reaction is (15S)-hydroperoxy-(5Z,8Z,11Z,13E)-eicosatetraenoate + 2 glutathione = (15S)-hydroxy-(5Z,8Z,11Z,13E)-eicosatetraenoate + glutathione disulfide + H2O. It carries out the reaction (5S)-hydroperoxy-(6E,8Z,11Z,14Z,17Z)-eicosapentaenoate + 2 glutathione = (5S)-hydroxy-(6E,8Z,11Z,14Z,17Z)-eicosapentaenoate + glutathione disulfide + H2O. It catalyses the reaction (15S)-hydroperoxy-(5Z,8Z,11Z,13E,17Z)-eicosapentaenoate + 2 glutathione = (15S)-hydroxy-(5Z,8Z,11Z,13E,17Z)-eicosapentaenoate + glutathione disulfide + H2O. The enzyme catalyses (15S)-hydroperoxy-(11Z,13E)-eicosadienoate + 2 glutathione = (15S)-hydroxy-(11Z,13E)-eicosadienoate + glutathione disulfide + H2O. The catalysed reaction is (17S)-hydroperoxy-(4Z,7Z,10Z,13Z,15E,19Z)-docosahexaenoate + 2 glutathione = (17S)-hydroxy-(4Z,7Z,10Z,13Z,15E,19Z)-docosahexaenoate + glutathione disulfide + H2O. Functionally, catalyzes the reduction of hydroperoxides in a glutathione-dependent manner thus regulating cellular redox homeostasis. Can reduce small soluble hydroperoxides such as H2O2, cumene hydroperoxide and tert-butyl hydroperoxide, as well as several fatty acid-derived hydroperoxides. In platelets catalyzes the reduction of 12-hydroperoxyeicosatetraenoic acid, the primary product of the arachidonate 12-lipoxygenase pathway. The sequence is that of Glutathione peroxidase 1 (GPX1) from Bos taurus (Bovine).